The sequence spans 367 residues: Leucine carboxyl methyltransferase 1 (367 aa).

S-adenosyl-L-methionine-binding positions include Arg-84, Gly-109, Asp-132, 187–188 (DL), and Glu-212.

It belongs to the methyltransferase superfamily. LCMT family.

It catalyses the reaction [phosphatase 2A protein]-C-terminal L-leucine + S-adenosyl-L-methionine = [phosphatase 2A protein]-C-terminal L-leucine methyl ester + S-adenosyl-L-homocysteine. Methylates the carboxyl group of the C-terminal leucine residue of protein phosphatase 2A catalytic subunits to form alpha-leucine ester residues. The chain is Leucine carboxyl methyltransferase 1 (PPM1) from Candida albicans (strain SC5314 / ATCC MYA-2876) (Yeast).